Consider the following 309-residue polypeptide: ATP synthase gamma chain (309 aa).

It belongs to the ATPase gamma chain family. F-type ATPases have 2 components, CF(1) - the catalytic core - and CF(0) - the membrane proton channel. CF(1) has five subunits: alpha(3), beta(3), gamma(1), delta(1), epsilon(1). CF(0) has three main subunits: a, b and c.

The protein resides in the cell membrane. Produces ATP from ADP in the presence of a proton gradient across the membrane. The gamma chain is believed to be important in regulating ATPase activity and the flow of protons through the CF(0) complex. This Mycolicibacterium gilvum (strain PYR-GCK) (Mycobacterium gilvum (strain PYR-GCK)) protein is ATP synthase gamma chain.